Here is a 636-residue protein sequence, read N- to C-terminus: Threonine--tRNA ligase (636 aa).

The 59-residue stretch at 1–59 (MPIITLPDGTKKIFEQVVSVEQVAKSMGLVKAALAGEVDGELVSTSFLIKTDANLTIIT) folds into the TGS domain. The tract at residues 240–531 (DHRKIGKTQD…LIEHYEGAYP (292 aa)) is catalytic. Residues Cys-331, His-382, and His-508 each contribute to the Zn(2+) site.

Belongs to the class-II aminoacyl-tRNA synthetase family. Homodimer. The cofactor is Zn(2+).

It localises to the cytoplasm. It carries out the reaction tRNA(Thr) + L-threonine + ATP = L-threonyl-tRNA(Thr) + AMP + diphosphate + H(+). In terms of biological role, catalyzes the attachment of threonine to tRNA(Thr) in a two-step reaction: L-threonine is first activated by ATP to form Thr-AMP and then transferred to the acceptor end of tRNA(Thr). Also edits incorrectly charged L-seryl-tRNA(Thr). The chain is Threonine--tRNA ligase from Vesicomyosocius okutanii subsp. Calyptogena okutanii (strain HA).